A 365-amino-acid chain; its full sequence is MNLLTMSTELIYIFLFSMAFLFVARKVAIKIGLVDKPNYRKRHQGLIPLVGGISVFAGVCFAFLITNQQIPHFRLYLACAGLLVFVGALDDRFDISVKIRAFVQALVGIAMMAVAGLYLRSLGHAFGPWEMVLGPFGYVVTLFAVWAAINAFNMVDGIDGLLGGLSCVSFGAMGILLYQSGQMSLALWCFAMIATIIPYILLNLGLLGRRYKVFMGDAGSTLIGFTAIWILLQATQGNAHPINPVTALWIIAIPLMDMIAIMYRRLRKGMSPFSPDRQHIHHLIMRAGFTSRQAFVLITLAAALLAMIGVIGERLTFIPEWVMLALFLLAFLLYGYCIKRAWRVARFIKRFKRRMRRASKNKHES.

The next 10 helical transmembrane spans lie at 3–23 (LLTMSTELIYIFLFSMAFLFV), 45–65 (GLIPLVGGISVFAGVCFAFLI), 99–119 (IRAFVQALVGIAMMAVAGLYL), 132–152 (VLGPFGYVVTLFAVWAAINAF), 157–177 (GIDGLLGGLSCVSFGAMGILL), 187–207 (LWCFAMIATIIPYILLNLGLL), 213–233 (VFMGDAGSTLIGFTAIWILLQ), 242–262 (INPVTALWIIAIPLMDMIAIM), 293–313 (QAFVLITLAAALLAMIGVIGE), and 315–335 (LTFIPEWVMLALFLLAFLLYG).

The protein belongs to the glycosyltransferase 4 family. WecA subfamily. It depends on Mg(2+) as a cofactor. Requires Mn(2+) as cofactor.

Its subcellular location is the cell inner membrane. The enzyme catalyses di-trans,octa-cis-undecaprenyl phosphate + UDP-N-acetyl-alpha-D-glucosamine = N-acetyl-alpha-D-glucosaminyl-di-trans,octa-cis-undecaprenyl diphosphate + UMP. It functions in the pathway bacterial outer membrane biogenesis; LPS O-antigen biosynthesis. The protein operates within bacterial outer membrane biogenesis; enterobacterial common antigen biosynthesis. Functionally, catalyzes the transfer of the GlcNAc-1-phosphate moiety from UDP-GlcNAc onto the carrier lipid undecaprenyl phosphate (C55-P), yielding GlcNAc-pyrophosphoryl-undecaprenyl (GlcNAc-PP-C55). The polypeptide is Undecaprenyl-phosphate alpha-N-acetylglucosaminyl 1-phosphate transferase (Yersinia pestis).